Reading from the N-terminus, the 388-residue chain is Mitochondrial distribution and morphology protein 12 (388 aa).

The region spanning 1 to 388 is the SMP-LTD domain; sequence MSLDINWSLL…VFPNFHTVAL (388 aa). 2 disordered regions span residues 75–101 and 209–251; these read DDEG…RNEA and PMSI…SSSS. Residues 83-101 are compositionally biased toward basic and acidic residues; it reads EEKQREKEREERDKLRNEA. The span at 234-243 shows a compositional bias: pro residues; it reads PSPPAHPAGL.

Belongs to the MDM12 family. As to quaternary structure, component of the ER-mitochondria encounter structure (ERMES) or MDM complex, composed of MMM1, MDM10, MDM12 and MDM34. An MMM1 homodimer associates with one molecule of MDM12 on each side in a pairwise head-to-tail manner, and the SMP-LTD domains of MMM1 and MDM12 generate a continuous hydrophobic tunnel for phospholipid trafficking.

It is found in the mitochondrion outer membrane. Its subcellular location is the endoplasmic reticulum membrane. Its function is as follows. Component of the ERMES/MDM complex, which serves as a molecular tether to connect the endoplasmic reticulum (ER) and mitochondria. Components of this complex are involved in the control of mitochondrial shape and protein biogenesis, and function in nonvesicular lipid trafficking between the ER and mitochondria. MDM12 is required for the interaction of the ER-resident membrane protein MMM1 and the outer mitochondrial membrane-resident beta-barrel protein MDM10. The MDM12-MMM1 subcomplex functions in the major beta-barrel assembly pathway that is responsible for biogenesis of all mitochondrial outer membrane beta-barrel proteins, and acts in a late step after the SAM complex. The MDM10-MDM12-MMM1 subcomplex further acts in the TOM40-specific pathway after the action of the MDM12-MMM1 complex. Essential for establishing and maintaining the structure of mitochondria and maintenance of mtDNA nucleoids. This Cryptococcus neoformans var. neoformans serotype D (strain B-3501A) (Filobasidiella neoformans) protein is Mitochondrial distribution and morphology protein 12.